The following is a 507-amino-acid chain: ATP synthase subunit alpha, chloroplastic (507 aa).

170–177 (GDRQTGKT) contacts ATP.

Belongs to the ATPase alpha/beta chains family. F-type ATPases have 2 components, CF(1) - the catalytic core - and CF(0) - the membrane proton channel. CF(1) has five subunits: alpha(3), beta(3), gamma(1), delta(1), epsilon(1). CF(0) has four main subunits: a, b, b' and c.

It localises to the plastid. Its subcellular location is the chloroplast thylakoid membrane. It carries out the reaction ATP + H2O + 4 H(+)(in) = ADP + phosphate + 5 H(+)(out). Its function is as follows. Produces ATP from ADP in the presence of a proton gradient across the membrane. The alpha chain is a regulatory subunit. The polypeptide is ATP synthase subunit alpha, chloroplastic (Acorus calamus var. americanus (American sweet flag)).